Reading from the N-terminus, the 448-residue chain is Probable glycine dehydrogenase (decarboxylating) subunit 1 (448 aa).

Belongs to the GcvP family. N-terminal subunit subfamily. In terms of assembly, the glycine cleavage system is composed of four proteins: P, T, L and H. In this organism, the P 'protein' is a heterodimer of two subunits.

The enzyme catalyses N(6)-[(R)-lipoyl]-L-lysyl-[glycine-cleavage complex H protein] + glycine + H(+) = N(6)-[(R)-S(8)-aminomethyldihydrolipoyl]-L-lysyl-[glycine-cleavage complex H protein] + CO2. Its function is as follows. The glycine cleavage system catalyzes the degradation of glycine. The P protein binds the alpha-amino group of glycine through its pyridoxal phosphate cofactor; CO(2) is released and the remaining methylamine moiety is then transferred to the lipoamide cofactor of the H protein. The chain is Probable glycine dehydrogenase (decarboxylating) subunit 1 from Listeria monocytogenes serotype 4b (strain CLIP80459).